A 291-amino-acid polypeptide reads, in one-letter code: 4-diphosphocytidyl-2-C-methyl-D-erythritol kinase (291 aa).

Residue K11 is part of the active site. Position 94–104 (94–104 (PAGSGLGGGSA)) interacts with ATP. The active site involves D136.

Belongs to the GHMP kinase family. IspE subfamily.

It catalyses the reaction 4-CDP-2-C-methyl-D-erythritol + ATP = 4-CDP-2-C-methyl-D-erythritol 2-phosphate + ADP + H(+). Its pathway is isoprenoid biosynthesis; isopentenyl diphosphate biosynthesis via DXP pathway; isopentenyl diphosphate from 1-deoxy-D-xylulose 5-phosphate: step 3/6. In terms of biological role, catalyzes the phosphorylation of the position 2 hydroxy group of 4-diphosphocytidyl-2C-methyl-D-erythritol. The sequence is that of 4-diphosphocytidyl-2-C-methyl-D-erythritol kinase from Treponema pallidum (strain Nichols).